A 248-amino-acid polypeptide reads, in one-letter code: MYKLVLVRHGESEWNRENLFTGWTDVKLSEKGISEALEGGRVLKQNGYSFDIAFSSMLVRANDTLNIILRELGQSYIDVEKSWRLNERHYGALQGLNKAETAEKYGEDQVLMWRRSYDIPPMPLEESDKRHPIHDLRYKGIPKSELPSTECLKDTVARVIPYWTDKIAKAIIEGKRVIIAAHGNSLRALVKYLDNMSDDDILKLNIPTGIPLVYELDQDLRPIKHYYLGDEDKIKAAMESVANQGKKK.

Substrate contacts are provided by residues 8–15 (RHGESEWN), 21–22 (TG), Arg-60, 87–90 (ERHY), Lys-98, 114–115 (RR), and 183–184 (GN). Residue His-9 is the Tele-phosphohistidine intermediate of the active site. The Proton donor/acceptor role is filled by Glu-87.

Belongs to the phosphoglycerate mutase family. BPG-dependent PGAM subfamily.

It carries out the reaction (2R)-2-phosphoglycerate = (2R)-3-phosphoglycerate. Its pathway is carbohydrate degradation; glycolysis; pyruvate from D-glyceraldehyde 3-phosphate: step 3/5. Catalyzes the interconversion of 2-phosphoglycerate and 3-phosphoglycerate. In Borrelia hermsii (strain HS1 / DAH), this protein is 2,3-bisphosphoglycerate-dependent phosphoglycerate mutase.